The sequence spans 551 residues: Putative transport protein CGSHiEE_03135 (551 aa).

A run of 5 helical transmembrane segments spans residues 4–24, 28–48, 65–85, 95–115, and 157–177; these read IAIT…IGHW, GVGL…HFTD, FGLI…FFSS, AFAI…HKIA, and VSYA…MWLI. RCK C-terminal domains are found at residues 191-275 and 277-360; these read RFNA…IIGY and VDAP…VIGN. A run of 6 helical transmembrane segments spans residues 370–390, 402–424, 438–458, 463–483, 492–512, and 529–549; these read MLPV…PFYI, AGGP…LYWF, IVLF…DTLV, LEWM…AGTI, YLTI…LAFA, and VYPL…VLLW.

It belongs to the AAE transporter (TC 2.A.81) family. YidE subfamily.

Its subcellular location is the cell membrane. The polypeptide is Putative transport protein CGSHiEE_03135 (Haemophilus influenzae (strain PittEE)).